The primary structure comprises 83 residues: Neurotoxin LmNaTx10 (83 aa).

An N-terminal signal peptide occupies residues 1–19 (MNFLIFIAVASSLALGALC). One can recognise an LCN-type CS-alpha/beta domain in the interval 21-80 (KEGYPYDGNNCRYICFRNQYCDDLCKKLKGESGYCYGWNQSCYCYGLPDTEKTKPDKRCH). 4 disulfides stabilise this stretch: Cys31/Cys79, Cys35/Cys55, Cys41/Cys62, and Cys45/Cys64.

The protein belongs to the long (4 C-C) scorpion toxin superfamily. Sodium channel inhibitor family. Alpha subfamily. In terms of tissue distribution, expressed by the venom gland.

The protein resides in the secreted. Functionally, binds voltage-independently at site-3 of voltage-gated sodium channels (Nav) and inhibits the inactivation of the activated channels, thereby blocking neuronal transmission. The sequence is that of Neurotoxin LmNaTx10 from Lychas mucronatus (Chinese swimming scorpion).